The chain runs to 643 residues: 1-deoxy-D-xylulose-5-phosphate synthase (643 aa).

Thiamine diphosphate-binding positions include His72 and 113–115 (GHA). Asp144 contacts Mg(2+). Thiamine diphosphate-binding positions include 145 to 146 (GA), Asn174, Tyr287, and Glu370. Residue Asn174 coordinates Mg(2+).

The protein belongs to the transketolase family. DXPS subfamily. In terms of assembly, homodimer. The cofactor is Mg(2+). Thiamine diphosphate is required as a cofactor.

It carries out the reaction D-glyceraldehyde 3-phosphate + pyruvate + H(+) = 1-deoxy-D-xylulose 5-phosphate + CO2. It participates in metabolic intermediate biosynthesis; 1-deoxy-D-xylulose 5-phosphate biosynthesis; 1-deoxy-D-xylulose 5-phosphate from D-glyceraldehyde 3-phosphate and pyruvate: step 1/1. Functionally, catalyzes the acyloin condensation reaction between C atoms 2 and 3 of pyruvate and glyceraldehyde 3-phosphate to yield 1-deoxy-D-xylulose-5-phosphate (DXP). This is 1-deoxy-D-xylulose-5-phosphate synthase from Prochlorococcus marinus (strain SARG / CCMP1375 / SS120).